The following is a 235-amino-acid chain: Secretory carrier-associated membrane protein 5B (235 aa).

The Cytoplasmic segment spans residues 1–39 (MSDKPNNFPPLPRFIPLKPCFYQDFDTDIPDVHRTTAKR). A helical transmembrane segment spans residues 40–60 (LYYLWMLNSITLGVNLIGCLA). The Extracellular portion of the chain corresponds to 61-67 (WLIGGGG). The helical transmembrane segment at 68–88 (ATNFGLAFLWLILFTPCSYVC) threads the bilayer. The Cytoplasmic portion of the chain corresponds to 89–102 (WFRPIYKAFKTDSS). A helical membrane pass occupies residues 103 to 125 (FNFMAFFFTFTGQLVISIIQAVG). Residues 126 to 148 (IPGWGVCGWIASISFFGTNVGSA) are Extracellular-facing. The helical transmembrane segment at 149 to 169 (VVMLIPTIMFTAVAVLSFVAL) threads the bilayer. Residues 170–235 (TKVHRFYRGA…TPNYGYSNQM (66 aa)) lie on the Cytoplasmic side of the membrane.

This sequence belongs to the SCAMP family. SCAMP5 subfamily.

Its subcellular location is the cell membrane. It localises to the golgi apparatus membrane. The protein resides in the golgi apparatus. The protein localises to the trans-Golgi network membrane. It is found in the recycling endosome membrane. Its subcellular location is the cytoplasmic vesicle. It localises to the secretory vesicle. The protein resides in the synaptic vesicle membrane. Functionally, required for the calcium-dependent exocytosis of signal sequence-containing cytokines. Probably acts in cooperation with the SNARE machinery. This Xenopus laevis (African clawed frog) protein is Secretory carrier-associated membrane protein 5B (scamp5-b).